We begin with the raw amino-acid sequence, 409 residues long: ATPase ASNA1 homolog (409 aa).

21–28 (KGGVGKTT) contributes to the ATP binding site. Asp-62 is an active-site residue. Glu-303 and Asn-330 together coordinate ATP. Cys-342 and Cys-345 together coordinate Zn(2+).

The protein belongs to the arsA ATPase family. As to quaternary structure, homodimer.

It localises to the cytoplasm. The protein localises to the endoplasmic reticulum. ATPase required for the post-translational delivery of tail-anchored (TA) proteins to the endoplasmic reticulum. Recognizes and selectively binds the transmembrane domain of TA proteins in the cytosol. This complex then targets to the endoplasmic reticulum by membrane-bound receptors, where the tail-anchored protein is released for insertion. This process is regulated by ATP binding and hydrolysis. ATP binding drives the homodimer towards the closed dimer state, facilitating recognition of newly synthesized TA membrane proteins. ATP hydrolysis is required for insertion. Subsequently, the homodimer reverts towards the open dimer state, lowering its affinity for the membrane-bound receptor, and returning it to the cytosol to initiate a new round of targeting. The polypeptide is ATPase ASNA1 homolog (Leishmania infantum).